We begin with the raw amino-acid sequence, 483 residues long: Aspartyl/glutamyl-tRNA(Asn/Gln) amidotransferase subunit B (483 aa).

It belongs to the GatB/GatE family. GatB subfamily. Heterotrimer of A, B and C subunits.

The enzyme catalyses L-glutamyl-tRNA(Gln) + L-glutamine + ATP + H2O = L-glutaminyl-tRNA(Gln) + L-glutamate + ADP + phosphate + H(+). The catalysed reaction is L-aspartyl-tRNA(Asn) + L-glutamine + ATP + H2O = L-asparaginyl-tRNA(Asn) + L-glutamate + ADP + phosphate + 2 H(+). Functionally, allows the formation of correctly charged Asn-tRNA(Asn) or Gln-tRNA(Gln) through the transamidation of misacylated Asp-tRNA(Asn) or Glu-tRNA(Gln) in organisms which lack either or both of asparaginyl-tRNA or glutaminyl-tRNA synthetases. The reaction takes place in the presence of glutamine and ATP through an activated phospho-Asp-tRNA(Asn) or phospho-Glu-tRNA(Gln). This chain is Aspartyl/glutamyl-tRNA(Asn/Gln) amidotransferase subunit B, found in Granulibacter bethesdensis (strain ATCC BAA-1260 / CGDNIH1).